The sequence spans 407 residues: Lysine racemase (407 aa).

An N-terminal signal peptide occupies residues 1-18; sequence MSLGIRYLALLPLFVITA. Cys19 carries the N-palmitoyl cysteine lipid modification. Residue Cys19 is the site of S-diacylglycerol cysteine attachment. The cysteines at positions 70 and 96 are disulfide-linked. The Proton acceptor role is filled by Lys74. Position 74 is an N6-(pyridoxal phosphate)lysine (Lys74). Residue Arg173 coordinates substrate. Tyr299 functions as the Proton acceptor in the catalytic mechanism. Residue Met347 coordinates substrate.

This sequence belongs to the alanine racemase family. Bsr subfamily. In terms of assembly, forms a head-to-tail homodimer in the structure. Requires pyridoxal 5'-phosphate as cofactor.

It is found in the cell membrane. The protein resides in the periplasm. The enzyme catalyses L-lysine = D-lysine. The catalysed reaction is L-arginine = D-arginine. With respect to regulation, the racemization activity of Lyr is completely inhibited by hydroxylamine. In terms of biological role, amino-acid racemase that catalyzes the interconversion of L-lysine and D-lysine. To a lesser extent, is also able to interconvert arginine enantiomers. Cannot use methionine, asparagine, alanine, leucine, glutamine, phenylalanine and histidine as substrates. In Proteus mirabilis, this protein is Lysine racemase.